The following is a 321-amino-acid chain: Sialic acid-binding periplasmic protein SiaP (321 aa).

The signal sequence occupies residues 1–22 (MKTINKITIAILTLSAAASVNA).

It belongs to the bacterial solute-binding protein 7 family. The complex comprises the extracytoplasmic solute receptor protein SiaP, and the two transmembrane proteins SiaQ and SiaM.

It is found in the periplasm. Functionally, part of the tripartite ATP-independent periplasmic (TRAP) transport system SiaPQM that catalyzes unidirectional Na(+)-dependent sialic acid uptake. Binds the common sialic acid N-acetylneuraminic acid (Neu5Ac) with a high affinity. The polypeptide is Sialic acid-binding periplasmic protein SiaP (Vibrio cholerae serotype O1 (strain ATCC 39315 / El Tor Inaba N16961)).